The sequence spans 365 residues: Probable dual-specificity RNA methyltransferase RlmN (365 aa).

The Proton acceptor role is filled by Glu-106. The Radical SAM core domain maps to Tyr-112–Glu-352. Residues Cys-119 and Cys-357 are joined by a disulfide bond. 3 residues coordinate [4Fe-4S] cluster: Cys-126, Cys-130, and Cys-133. Residues Gly-181–Glu-182, Ser-215, Ser-238–His-240, and Asn-314 each bind S-adenosyl-L-methionine. Residue Cys-357 is the S-methylcysteine intermediate of the active site.

This sequence belongs to the radical SAM superfamily. RlmN family. [4Fe-4S] cluster serves as cofactor.

It localises to the cytoplasm. The enzyme catalyses adenosine(2503) in 23S rRNA + 2 reduced [2Fe-2S]-[ferredoxin] + 2 S-adenosyl-L-methionine = 2-methyladenosine(2503) in 23S rRNA + 5'-deoxyadenosine + L-methionine + 2 oxidized [2Fe-2S]-[ferredoxin] + S-adenosyl-L-homocysteine. It carries out the reaction adenosine(37) in tRNA + 2 reduced [2Fe-2S]-[ferredoxin] + 2 S-adenosyl-L-methionine = 2-methyladenosine(37) in tRNA + 5'-deoxyadenosine + L-methionine + 2 oxidized [2Fe-2S]-[ferredoxin] + S-adenosyl-L-homocysteine. Specifically methylates position 2 of adenine 2503 in 23S rRNA and position 2 of adenine 37 in tRNAs. This Thermobifida fusca (strain YX) protein is Probable dual-specificity RNA methyltransferase RlmN.